A 341-amino-acid chain; its full sequence is Methionine import ATP-binding protein MetN 2 (341 aa).

In terms of domain architecture, ABC transporter spans 2–241 (IELKEVVKEY…PQHTVTKRFV (240 aa)). ATP is bound at residue 38–45 (GFSGAGKS).

The protein belongs to the ABC transporter superfamily. Methionine importer (TC 3.A.1.24) family. In terms of assembly, the complex is composed of two ATP-binding proteins (MetN), two transmembrane proteins (MetI) and a solute-binding protein (MetQ).

It is found in the cell membrane. It carries out the reaction L-methionine(out) + ATP + H2O = L-methionine(in) + ADP + phosphate + H(+). It catalyses the reaction D-methionine(out) + ATP + H2O = D-methionine(in) + ADP + phosphate + H(+). Functionally, part of the ABC transporter complex MetNIQ involved in methionine import. Responsible for energy coupling to the transport system. The sequence is that of Methionine import ATP-binding protein MetN 2 from Staphylococcus aureus (strain USA300).